The following is a 912-amino-acid chain: Protein translocase subunit SecA (912 aa).

Residues Q87, G105–T109, and D508 contribute to the ATP site. The tract at residues Q855–S912 is disordered. Zn(2+) is bound by residues C896, C898, C907, and H908. A compositionally biased stretch (basic residues) spans K902–S912.

Belongs to the SecA family. In terms of assembly, monomer and homodimer. Part of the essential Sec protein translocation apparatus which comprises SecA, SecYEG and auxiliary proteins SecDF-YajC and YidC. Zn(2+) serves as cofactor.

The protein localises to the cell inner membrane. It localises to the cytoplasm. It carries out the reaction ATP + H2O + cellular proteinSide 1 = ADP + phosphate + cellular proteinSide 2.. Functionally, part of the Sec protein translocase complex. Interacts with the SecYEG preprotein conducting channel. Has a central role in coupling the hydrolysis of ATP to the transfer of proteins into and across the cell membrane, serving both as a receptor for the preprotein-SecB complex and as an ATP-driven molecular motor driving the stepwise translocation of polypeptide chains across the membrane. This is Protein translocase subunit SecA from Xanthomonas campestris pv. campestris (strain 8004).